The chain runs to 184 residues: Chaperone protein dnaJ 72 (184 aa).

One can recognise a J domain in the interval Asp-3 to Ser-73. The chain crosses the membrane as a helical span at residues Phe-133–Ile-150.

This sequence belongs to the DnaJ family. C/III subfamily.

It is found in the membrane. Plays a continuous role in plant development probably in the structural organization of compartments. This chain is Chaperone protein dnaJ 72 (ATJ72), found in Arabidopsis thaliana (Mouse-ear cress).